We begin with the raw amino-acid sequence, 622 residues long: DNA mismatch repair protein MutL (622 aa).

It belongs to the DNA mismatch repair MutL/HexB family.

Its function is as follows. This protein is involved in the repair of mismatches in DNA. It is required for dam-dependent methyl-directed DNA mismatch repair. May act as a 'molecular matchmaker', a protein that promotes the formation of a stable complex between two or more DNA-binding proteins in an ATP-dependent manner without itself being part of a final effector complex. The chain is DNA mismatch repair protein MutL from Prosthecochloris aestuarii (strain DSM 271 / SK 413).